We begin with the raw amino-acid sequence, 126 residues long: Interleukin-18-binding protein (126 aa).

A signal peptide spans 1–20 (MRILFLIAFMYGCVHPYVNA).

This sequence belongs to the orthopoxvirus OPG022 family.

It localises to the secreted. Functionally, soluble IL18-binding protein that may modulate the host antiviral response. In Bos taurus (Bovine), this protein is Interleukin-18-binding protein (OPG022).